The sequence spans 534 residues: 5,6-dihydroxyindole-2-carboxylic acid oxidase (534 aa).

The first 23 residues, 1 to 23 (MLGPATFLPLTAALLLLIPGGRA), serve as a signal peptide directing secretion. The Lumenal, melanosome portion of the chain corresponds to 24-477 (QFPRQCVTPE…WPSRALNFTE (454 aa)). Intrachain disulfides connect Cys29/Cys40, Cys41/Cys65, Cys56/Cys99, Cys101/Cys110, and Cys113/Cys122. 2 N-linked (GlcNAc...) asparagine glycosylation sites follow: Asn96 and Asn104. N-linked (GlcNAc...) asparagine glycans are attached at residues Asn175 and Asn181. The Zn(2+) site is built by His192, His215, and His224. 2 disulfide bridges follow: Cys258-Cys261 and Cys290-Cys303. Asn304 and Asn350 each carry an N-linked (GlcNAc...) asparagine glycan. His377 and His381 together coordinate Zn(2+). Asn385 carries an N-linked (GlcNAc...) asparagine glycan. His404 lines the Zn(2+) pocket. Residues 478 to 501 (IITIAVVAALVLVAVIFAAASCAV) form a helical membrane-spanning segment. Over 502 to 534 (HRSRKDDVHQPLLGEQYPRYSEEYERDASQSAV) the chain is Cytoplasmic.

The protein belongs to the tyrosinase family. Cu(2+) serves as cofactor. Zn(2+) is required as a cofactor.

The protein localises to the melanosome membrane. It carries out the reaction 2 5,6-dihydroxyindole-2-carboxylate + O2 = 2 indole-5,6-quinone-2-carboxylate + 2 H2O. It functions in the pathway pigment biosynthesis; melanin biosynthesis. Functionally, plays a role in melanin biosynthesis. Catalyzes the oxidation of 5,6-dihydroxyindole-2-carboxylic acid (DHICA) into indole-5,6-quinone-2-carboxylic acid. May regulate or influence the type of melanin synthesized. Also to a lower extent, capable of hydroxylating tyrosine and producing melanin. The chain is 5,6-dihydroxyindole-2-carboxylic acid oxidase (TYRP1) from Ambystoma mexicanum (Axolotl).